The sequence spans 94 residues: Putative regulatory protein Tmel_0100 (94 aa).

The protein belongs to the RemA family.

In Thermosipho melanesiensis (strain DSM 12029 / CIP 104789 / BI429), this protein is Putative regulatory protein Tmel_0100.